A 180-amino-acid chain; its full sequence is Adenine phosphoribosyltransferase (180 aa).

Belongs to the purine/pyrimidine phosphoribosyltransferase family. As to quaternary structure, homodimer.

It is found in the cytoplasm. The enzyme catalyses AMP + diphosphate = 5-phospho-alpha-D-ribose 1-diphosphate + adenine. Its pathway is purine metabolism; AMP biosynthesis via salvage pathway; AMP from adenine: step 1/1. Its function is as follows. Catalyzes a salvage reaction resulting in the formation of AMP, that is energically less costly than de novo synthesis. The polypeptide is Adenine phosphoribosyltransferase (Rhizobium johnstonii (strain DSM 114642 / LMG 32736 / 3841) (Rhizobium leguminosarum bv. viciae)).